A 154-amino-acid polypeptide reads, in one-letter code: Major allergen Dau c 1 (154 aa).

Belongs to the BetVI family. In terms of assembly, homodimer.

This is Major allergen Dau c 1 from Daucus carota (Wild carrot).